A 208-amino-acid chain; its full sequence is Outer-membrane lipoprotein carrier protein (208 aa).

An N-terminal signal peptide occupies residues 1 to 22 (MKKIFTIAALSLPLFCHLPAMA).

Belongs to the LolA family. In terms of assembly, monomer.

Its subcellular location is the periplasm. Its function is as follows. Participates in the translocation of lipoproteins from the inner membrane to the outer membrane. Only forms a complex with a lipoprotein if the residue after the N-terminal Cys is not an aspartate (The Asp acts as a targeting signal to indicate that the lipoprotein should stay in the inner membrane). The sequence is that of Outer-membrane lipoprotein carrier protein from Shewanella pealeana (strain ATCC 700345 / ANG-SQ1).